The following is a 437-amino-acid chain: Protein farnesyltransferase subunit beta (437 aa).

PFTB repeat units follow at residues 123–164 (ATDV…CIIG), 174–215 (REKL…SLTN), 222–263 (FEGT…VILK), 270–312 (LKSL…PLLH), and 332–374 (QQAL…SIAQ). (2E,6E)-farnesyl diphosphate is bound by residues 248-251 (HGGY) and 291-294 (RCNK). The Zn(2+) site is built by D297 and C299. 300 to 303 (YSFW) is a binding site for (2E,6E)-farnesyl diphosphate. A Zn(2+)-binding site is contributed by H362. S432 bears the Phosphoserine mark. Position 436 is a phosphothreonine (T436).

Belongs to the protein prenyltransferase subunit beta family. In terms of assembly, heterodimer of FNTA and FNTB. Zn(2+) is required as a cofactor.

It carries out the reaction L-cysteinyl-[protein] + (2E,6E)-farnesyl diphosphate = S-(2E,6E)-farnesyl-L-cysteinyl-[protein] + diphosphate. Essential subunit of the farnesyltransferase complex. Catalyzes the transfer of a farnesyl moiety from farnesyl diphosphate to a cysteine at the fourth position from the C-terminus of several proteins having the C-terminal sequence Cys-aliphatic-aliphatic-X. This is Protein farnesyltransferase subunit beta (Fntb) from Rattus norvegicus (Rat).